The primary structure comprises 211 residues: Redox-sensing transcriptional repressor Rex (211 aa).

A DNA-binding region (H-T-H motif) is located at residues K17–F56. G91–G96 contacts NAD(+).

The protein belongs to the transcriptional regulatory Rex family. Homodimer.

The protein localises to the cytoplasm. Modulates transcription in response to changes in cellular NADH/NAD(+) redox state. This chain is Redox-sensing transcriptional repressor Rex, found in Clostridium tetani (strain Massachusetts / E88).